Reading from the N-terminus, the 266-residue chain is Norfluorocurarine synthase 2 (266 aa).

Positions His11–Ile121 constitute an AB hydrolase-1 domain. Residues Ser86, Asp216, and His244 contribute to the active site.

It belongs to the AB hydrolase superfamily. Homodimer. In terms of tissue distribution, mainly expressed in roots.

It carries out the reaction 17-dehydropreakuammicine + H2O = norfluorocurarine + methanol + CO2. The protein operates within alkaloid biosynthesis. Hydrolase involved in the biosynthesis of curare monoterpene indole alkaloids (MIAs), natural products such as strychnine, a neurotoxic compound used as a pesticide to control rodents, and its pharmacologically active derivatives, including brucine, used to regulate blood pressure. Curare alkaloids act as animal glycine receptor antagonists. Catalyzes the conversion of dehydropreakuammicine to norfluorocurarine. The chain is Norfluorocurarine synthase 2 from Strychnos nux-vomica (Poison nut).